A 129-amino-acid polypeptide reads, in one-letter code: Small ribosomal subunit protein uS11 (129 aa).

The protein belongs to the universal ribosomal protein uS11 family. In terms of assembly, part of the 30S ribosomal subunit. Interacts with proteins S7 and S18. Binds to IF-3.

In terms of biological role, located on the platform of the 30S subunit, it bridges several disparate RNA helices of the 16S rRNA. Forms part of the Shine-Dalgarno cleft in the 70S ribosome. The protein is Small ribosomal subunit protein uS11 of Desulforamulus reducens (strain ATCC BAA-1160 / DSM 100696 / MI-1) (Desulfotomaculum reducens).